The following is a 236-amino-acid chain: Purine nucleoside phosphorylase DeoD-type (236 aa).

Histidine 5 is a binding site for a purine D-ribonucleoside. Residues glycine 21, arginine 25, arginine 44, and 88–91 contribute to the phosphate site; that span reads RVGS. A purine D-ribonucleoside-binding positions include 180–182 and 204–205; these read EME and SD. The Proton donor role is filled by aspartate 205.

The protein belongs to the PNP/UDP phosphorylase family. As to quaternary structure, homohexamer; trimer of homodimers.

The enzyme catalyses a purine D-ribonucleoside + phosphate = a purine nucleobase + alpha-D-ribose 1-phosphate. It carries out the reaction a purine 2'-deoxy-D-ribonucleoside + phosphate = a purine nucleobase + 2-deoxy-alpha-D-ribose 1-phosphate. Catalyzes the reversible phosphorolytic breakdown of the N-glycosidic bond in the beta-(deoxy)ribonucleoside molecules, with the formation of the corresponding free purine bases and pentose-1-phosphate. This Psychromonas ingrahamii (strain DSM 17664 / CCUG 51855 / 37) protein is Purine nucleoside phosphorylase DeoD-type.